The following is a 550-amino-acid chain: Hydroxylamine reductase (550 aa).

Residues cysteine 3, cysteine 6, cysteine 18, and cysteine 25 each contribute to the [2Fe-2S] cluster site. Histidine 249, glutamate 273, cysteine 317, cysteine 405, cysteine 433, cysteine 458, glutamate 492, and lysine 494 together coordinate hybrid [4Fe-2O-2S] cluster. Cysteine 405 carries the post-translational modification Cysteine persulfide.

It belongs to the HCP family. The cofactor is [2Fe-2S] cluster. It depends on hybrid [4Fe-2O-2S] cluster as a cofactor.

The protein resides in the cytoplasm. It catalyses the reaction A + NH4(+) + H2O = hydroxylamine + AH2 + H(+). Catalyzes the reduction of hydroxylamine to form NH(3) and H(2)O. The chain is Hydroxylamine reductase from Shigella boydii serotype 18 (strain CDC 3083-94 / BS512).